The following is a 164-amino-acid chain: Probable calcium-binding protein CML17 (164 aa).

EF-hand domains follow at residues 4-39, 40-75, 88-123, and 126-161; these read DQQAELRRVFELFDRDGDGRITREELTESLERLGMP, VHREELAATIARIDANGDGCVDMDEFTQLYETVMRV, VDEASMREAFDVFDRNGDGFITVDELGAVLASLGIK, and RTAEDCGRMIGQVDRDGDGRVDFLEFKQMMRGGAFA. Ca(2+) contacts are provided by Asp17, Asp19, Asp21, Arg23, Glu28, Asp53, Asn55, Asp57, Cys59, Glu64, Asp101, Asn103, Asp105, Glu112, Asp139, Asp141, Asp143, Arg145, and Glu150.

Its function is as follows. Potential calcium sensor. The sequence is that of Probable calcium-binding protein CML17 (CML17) from Oryza sativa subsp. japonica (Rice).